We begin with the raw amino-acid sequence, 106 residues long: Transcriptional and immune response regulator (106 aa).

Monomer. Interacts with NOTCH2 (via ANK repeats), the interaction inhibits the nuclear translocation of NOTCH2 N2ICD. Interacts (C-terminus) with CBY1 (C-terminus), TCIM competes with CTNNB1 for the interaction with CBY1. In terms of tissue distribution, expressed in liver, expression levels decrease in regenerating liver. In bone marrow, expressed in large progenitor-like cells, cells with ring-shaped nuclei and, at lower, levels in hematopietic stem cell-like cells with round nuclei (at protein level).

It localises to the cytoplasm. It is found in the nucleus. Its subcellular location is the nucleolus. The protein localises to the nucleus speckle. Seems to be involved in the regulation of cell growth an differentiation, may play different and opposite roles depending on the tissue or cell type. May enhance the WNT-CTNNB1 pathway by relieving antagonistic activity of CBY1. Enhances the proliferation of follicular dendritic cells. Plays a role in the mitogen-activated MAPK2/3 signaling pathway, positively regulates G1-to-S-phase transition of the cell cycle. In endothelial cells, enhances key inflammatory mediators and inflammatory response through the modulation of NF-kappaB transcriptional regulatory activity. Involved in the regulation of heat shock response, seems to play a positive feedback with HSF1 to modulate heat-shock downstream gene expression. Plays a role in the regulation of hematopoiesis even if the mechanisms are unknown. In cancers such as thyroid or lung cancer, it has been described as promoter of cell proliferation, G1-to-S-phase transition and inhibitor of apoptosis. However, it negatively regulates self-renewal of liver cancer cells via suppresion of NOTCH2 signaling. The polypeptide is Transcriptional and immune response regulator (Mus musculus (Mouse)).